Here is a 221-residue protein sequence, read N- to C-terminus: MKAFLGALEFQENEYEELKELYESLKTKQKPHTLFISCVDSRVVPNLITGTKPGELYVICNMGNVNPPKTSYKESLSTIASIEYAIAHVGVQNLIICGHSDCGACGSVHLIHDETTKAKTPYIANWIQFLEPVKEELKNHPQFSNHFAKRSWLTERLNARLQLNNLLSYDFIQEKASKNELKIFGWHYIIETGRIYNYNFESHFFEPIGETIKQRKSHENF.

Zn(2+)-binding residues include C38, D40, H99, and C102.

This sequence belongs to the beta-class carbonic anhydrase family. It depends on Zn(2+) as a cofactor.

It carries out the reaction hydrogencarbonate + H(+) = CO2 + H2O. In Helicobacter pylori (strain ATCC 700392 / 26695) (Campylobacter pylori), this protein is Carbonic anhydrase (cynT).